The primary structure comprises 178 residues: Crossover junction endodeoxyribonuclease RuvC (178 aa).

Residues D11, E71, and D143 contribute to the active site. Residues D11, E71, and D143 each coordinate Mg(2+).

The protein belongs to the RuvC family. In terms of assembly, homodimer which binds Holliday junction (HJ) DNA. The HJ becomes 2-fold symmetrical on binding to RuvC with unstacked arms; it has a different conformation from HJ DNA in complex with RuvA. In the full resolvosome a probable DNA-RuvA(4)-RuvB(12)-RuvC(2) complex forms which resolves the HJ. The cofactor is Mg(2+).

It localises to the cytoplasm. It carries out the reaction Endonucleolytic cleavage at a junction such as a reciprocal single-stranded crossover between two homologous DNA duplexes (Holliday junction).. The RuvA-RuvB-RuvC complex processes Holliday junction (HJ) DNA during genetic recombination and DNA repair. Endonuclease that resolves HJ intermediates. Cleaves cruciform DNA by making single-stranded nicks across the HJ at symmetrical positions within the homologous arms, yielding a 5'-phosphate and a 3'-hydroxyl group; requires a central core of homology in the junction. The consensus cleavage sequence is 5'-(A/T)TT(C/G)-3'. Cleavage occurs on the 3'-side of the TT dinucleotide at the point of strand exchange. HJ branch migration catalyzed by RuvA-RuvB allows RuvC to scan DNA until it finds its consensus sequence, where it cleaves and resolves the cruciform DNA. The polypeptide is Crossover junction endodeoxyribonuclease RuvC (Neisseria meningitidis serogroup C / serotype 2a (strain ATCC 700532 / DSM 15464 / FAM18)).